The sequence spans 1394 residues: MKDIFNFFEKPKDPLSFSAIRISLASPDKIRQWSHGEVKKPETINYRTFKPERDGLFCAKIFGPVKDYECNCGKYKRMKHRGVVCEKCGVEVIQSKVRRERLGHITLATPVAHIWFLKSLPSRIGNLLDITLKDLEKVLYCESYIVIDPKETTFQRGELLSEDRYQKALDEFGDDAFSAGMGGEAVLGLLRGVGPASKEHGEGIPGLANELRAEMKEATSDAKRKKIAKRLKVVEAFVASGNKPEWMMLEVIPVIPPDLRPLVPLDGGRFATSDLNDLYRRVINRNNRLKRLQELNAPDIIIRNEKRMLQEAVDALFDNGRRGKTITGPNKRPLKSLSDMLKGKQGRFRQNLLGKRVDYSGRSVIVVGPELKLHQCGLPKIMALELFKPFIYNKLEEKGYVTTIKSAKKMVEKERPEVWDILDEVIREHPVLLNRAPTLHRLGIQAFEPVLIEGKAIQLHPLVCTAFNADFDGDQMAVHVPLSIEAQMEARVLMMSTNNILSPAHGKPIIVPSQDIVLGIYYMTRERAFARGEGKVFASPEEVRAAYDQGEVDLQAKVWVRMDGKRVETTVGRVLLYDIVPRRLSFDAINKVMDKKQLQGLIDLTYRLCGEKETVLLADRVRSMGYGNATRAGISIALDNMVIPRKKVDLLERATREVDDIQAQYTEGLITIGERYNKVIDIWAQVTEEVAQEMMGEIGTETAVGTGKDGKREERRQPSFNPIYIMADSGARGSAQQIRQLAGMRGLMAKPSGEIIETPITANFREGLNVLQYFISTHGARKGLADTALKTANSGYLTRRLVDVAQDAIITEYDCGAMDGITLGALVEGGEIIEPMGERILGRVALDDILDAFSGNVLVKANEEIDEGRVKLIENSGIDKVKIRSVLTCQARRGICVECYGRDLARGRKVNIGEAVGVIAAQSIGEPGTQLTMRTFHIGGAASRRAEQSTIENRNAGLIKFNNVSVAKKHDGTLIVMNRNGEIIVTDDQGRERERYGVVYGAKLLVREGQKVEANQLLAEWDPYSMPIITEVAGRVKYGDLVDGVTISEQVDEITGLARKAVIASKDPDARPRISIKDEEGKTKKLANSDADARYMLPEGANLVVNDGDEVDAGDVIAKMPRETTKTKDITGGLPRVAELFEARKPKEHAVISEIDGVVAFGKDTKGKRKVVITPEVDGKLRPDLAKEYLIGKGKHISVHTGDRVRAGEALMDGAANPHDILRVLGEKELARWLVDEVQEVYRLQGVKINDKHIETIVRQMLRRVRIVDVGDTEFLADEQVEKFAFEEENERVLKAGGRAAQGEPLLLGITKASLSTESFISASSFQETTKVLTEAAISGKVDYLRGLKENVIMGRLVPAGTGLGAYKHLDIEVETPVDAVEEAEEALAVGAEE.

The Zn(2+) site is built by Cys-70, Cys-72, Cys-85, and Cys-88. Positions 470, 472, and 474 each coordinate Mg(2+). Residues Cys-815, Cys-889, Cys-896, and Cys-899 each contribute to the Zn(2+) site.

Belongs to the RNA polymerase beta' chain family. The RNAP catalytic core consists of 2 alpha, 1 beta, 1 beta' and 1 omega subunit. When a sigma factor is associated with the core the holoenzyme is formed, which can initiate transcription. Mg(2+) is required as a cofactor. The cofactor is Zn(2+).

The enzyme catalyses RNA(n) + a ribonucleoside 5'-triphosphate = RNA(n+1) + diphosphate. Functionally, DNA-dependent RNA polymerase catalyzes the transcription of DNA into RNA using the four ribonucleoside triphosphates as substrates. The polypeptide is DNA-directed RNA polymerase subunit beta' (Anaeromyxobacter dehalogenans (strain 2CP-C)).